We begin with the raw amino-acid sequence, 277 residues long: S-formylglutathione hydrolase FrmB (277 aa).

Catalysis depends on charge relay system residues S145, D221, and H254.

It belongs to the esterase D family.

It carries out the reaction S-formylglutathione + H2O = formate + glutathione + H(+). Its function is as follows. Serine hydrolase involved in the detoxification of formaldehyde. Hydrolyzes S-formylglutathione to glutathione and formate. The chain is S-formylglutathione hydrolase FrmB (frmB) from Escherichia coli O157:H7.